Here is a 1615-residue protein sequence, read N- to C-terminus: Low-density lipoprotein receptor-related protein 5 (1615 aa).

The N-terminal stretch at 1 to 31 (MEAAPPGPPWPLLLLLLLLLALCGCPAPAAA) is a signal peptide. Positions 32–288 (SPLLLFANRR…YSPMDIQVLS (257 aa)) are beta-propeller 1. The Extracellular segment spans residues 32-1384 (SPLLLFANRR…PPSDDSPAHS (1353 aa)). LDL-receptor class B repeat units lie at residues 75–119 (GAVY…DWVG), 120–162 (KKLY…DPAH), 163–206 (GYMY…DLEE), 207–247 (QKLY…TLSG), and 248–290 (DTLY…LSQE). The stretch at 78 to 81 (YWTD) is one YWTD 1 repeat. An N-linked (GlcNAc...) asparagine glycan is attached at Asn-93. Residues 123 to 126 (YWTD) form a YWTD 2 repeat. Asn-138 carries an N-linked (GlcNAc...) asparagine glycan. The stretch at 166–169 (YWTD) is one YWTD 3 repeat. A YWTD 4 repeat occupies 251–254 (YWTD). The EGF-like 1 domain maps to 295–337 (FHTRCEEDNGGCSHLCLLSPSEPFYTCACPTGVQLQDNGRTCK). Disulfide bonds link Cys-299–Cys-310, Cys-306–Cys-321, and Cys-323–Cys-336. Positions 341–602 (EEVLLLARRT…AVNVAKVVGT (262 aa)) are beta-propeller 2. LDL-receptor class B repeat units follow at residues 385 to 427 (GYVY…DWVA), 428 to 470 (RNLY…HPVM), 471 to 514 (GLMY…DLQE), 515 to 557 (GKLY…LGDF), and 558 to 600 (IYWT…AKVV). YWTD repeat units lie at residues 388 to 391 (YWTD) and 431 to 434 (YWTD). Asn-446 carries N-linked (GlcNAc...) asparagine glycosylation. The YWTD 7 repeat unit spans residues 474–477 (YWTD). Asn-499 carries N-linked (GlcNAc...) asparagine glycosylation. One copy of the YWTD 8 repeat lies at 559–562 (YWTD). In terms of domain architecture, EGF-like 2 spans 601-641 (GTNPCADRNGGCSHLCFFTPHATRCGCPIGLELLSDMKTCI). Cystine bridges form between Cys-605/Cys-616, Cys-612/Cys-625, and Cys-627/Cys-640. The beta-propeller 3 stretch occupies residues 644–903 (EAFLVFTSRA…VFHSSRQDGL (260 aa)). 5 LDL-receptor class B repeats span residues 687–729 (NHIY…DWMG), 730–772 (KNLY…DPTK), 773–815 (GYIY…DYAD), 816–855 (QRLY…TQYS), and 856–898 (DYIY…FHSS). Residues 690–693 (YWTD) form a YWTD 9 repeat. The N-linked (GlcNAc...) asparagine glycan is linked to Asn-705. YWTD repeat units follow at residues 819–822 (YWTD) and 859–862 (YWTD). Residue Asn-878 is glycosylated (N-linked (GlcNAc...) asparagine). Residues 902-942 (GLNDCMHNNGQCGQLCLAIPGGHRCGCASHYTLDPSSRNCS) form the EGF-like 3 domain. 3 disulfides stabilise this stretch: Cys-906–Cys-917, Cys-913–Cys-926, and Cys-928–Cys-941. Positions 945–1212 (TTFLLFSQKS…AVEEVSLEEF (268 aa)) are beta-propeller 4. 5 LDL-receptor class B repeats span residues 989–1035 (KFIY…DIYS), 1036–1078 (RTLF…NAER), 1079–1123 (GYLY…DNTL), 1124–1164 (GKLF…TILG), and 1165–1207 (KHLY…VEEV). An EGF-like 4 domain is found at 1213–1254 (SAHPCARDNGGCSHICIAKGDGTPRCSCPVHLVLLQNLLTCG). 12 disulfides stabilise this stretch: Cys-1217-Cys-1228, Cys-1224-Cys-1238, Cys-1240-Cys-1253, Cys-1259-Cys-1273, Cys-1266-Cys-1286, Cys-1280-Cys-1295, Cys-1298-Cys-1310, Cys-1305-Cys-1323, Cys-1317-Cys-1332, Cys-1336-Cys-1348, Cys-1343-Cys-1361, and Cys-1355-Cys-1370. LDL-receptor class A domains follow at residues 1258-1296 (TCSP…EGCP), 1297-1333 (VCSA…ADCD), and 1335-1371 (ICLP…LMCE). Residues 1385–1407 (SAIGPVIGIILSLFVMGGVYFVC) traverse the membrane as a helical segment. The Cytoplasmic segment spans residues 1408–1615 (QRVVCQRYAG…PPPSPCTDSS (208 aa)). Positions 1475–1501 (RNHVTGASSSSSSSTKATLYPPILNPP) are disordered. Positions 1500–1506 (PPPSPAT) match the PPPSP motif A motif. The PPPSP motif B signature appears at 1538–1545 (PPTTPCST). Residues 1568–1615 (SDSDPYPPPPTPHSQYLSAEDSCPPSPATERSYFHLFPPPPSPCTDSS) form a disordered region. The short motif at 1574–1581 (PPPPTPHS) is the PPPSP motif C element. The PPPSP motif D signature appears at 1591-1596 (PPSPAT). Residues 1604 to 1615 (FPPPPSPCTDSS) are compositionally biased toward pro residues. The PPPSP motif E motif lies at 1605-1612 (PPPPSPCT).

The protein belongs to the LDLR family. As to quaternary structure, homodimer; disulfide-linked. Forms phosphorylated oligomer aggregates on Wnt-signaling. Component of a Wnt-signaling complex that contains a WNT protein, a FZD protein and LRP5 or LRP6. Interacts with FZD8; the interaction is formed on WNT-binding and signaling. Interacts (via the phosphorylated PPPSP motif domains) with AXIN1; the interaction prevents inhibition of beta-catenin phosphorylation and signaling and is enhanced in the presence of GSK3B and WNT1 or WNT3A. Interacts (via beta-propeller regions 3 and 4) with DKK1; the interaction, enhanced by MESD and/or KREMEN, inhibits beta-catenin signaling by preventing GSK3-mediated phosphorylation of the PPPSP motifs and subsequent, AXIN1 binding. Interacts with MESD; the interaction prevents the formation of LRP5 aggregates, targets LRP5 to the plasma membrane and, when complexed with KREMEN2, increases DKK1 binding. Interacts with CSNK1E. Interacts with SOST; the interaction antagonizes canonical Wnt signaling. Interacts with APCDD1. Interacts with CAPRIN2. In terms of processing, phosphorylation of cytoplasmic PPPSP motifs regulates the signal transduction of the Wnt signaling pathway through acting as a docking site for AXIN1. Widely expressed, with the highest level of expression in the liver and in aorta.

The protein resides in the membrane. The protein localises to the endoplasmic reticulum. Acts as a coreceptor with members of the frizzled family of seven-transmembrane spanning receptors to transduce signal by Wnt proteins. Activates the canonical Wnt signaling pathway that controls cell fate determination and self-renewal during embryonic development and adult tissue regeneration. In particular, may play an important role in the development of the posterior patterning of the epiblast during gastrulation. During bone development, regulates osteoblast proliferation and differentiation thus determining bone mass. Mechanistically, the formation of the signaling complex between Wnt ligand, frizzled receptor and LRP5 coreceptor promotes the recruitment of AXIN1 to LRP5, stabilizing beta-catenin/CTNNB1 and activating TCF/LEF-mediated transcriptional programs. Acts as a coreceptor for non-Wnt proteins, such as norrin/NDP. Binding of norrin/NDP to frizzled 4/FZD4-LRP5 receptor complex triggers beta-catenin/CTNNB1-dependent signaling known to be required for retinal vascular development. Plays a role in controlling postnatal vascular regression in retina via macrophage-induced endothelial cell apoptosis. The protein is Low-density lipoprotein receptor-related protein 5 of Homo sapiens (Human).